The following is a 156-amino-acid chain: Transcription elongation factor GreA (156 aa).

Residues 7–27 (MTQEGLDKLKLELENLKLVKR) are a coiled coil.

The protein belongs to the GreA/GreB family.

Functionally, necessary for efficient RNA polymerase transcription elongation past template-encoded arresting sites. The arresting sites in DNA have the property of trapping a certain fraction of elongating RNA polymerases that pass through, resulting in locked ternary complexes. Cleavage of the nascent transcript by cleavage factors such as GreA or GreB allows the resumption of elongation from the new 3'terminus. GreA releases sequences of 2 to 3 nucleotides. In Lactococcus lactis subsp. lactis (strain IL1403) (Streptococcus lactis), this protein is Transcription elongation factor GreA.